A 607-amino-acid polypeptide reads, in one-letter code: Heterocyst differentiation ATP-binding protein HepA (607 aa).

Residues 32–330 (AILAVIFSFL…INGTVAFLST (299 aa)) form the ABC transmembrane type-1 domain. 5 helical membrane-spanning segments follow: residues 33–53 (ILAVIFSFLAASFEGVSIGFL), 77–97 (ILAADAWPIPPIYRISLLILL), 163–182 (FSGLAFVLTRIMTVCVYFVV), 186–208 (ISWQLSIISVLIFLLLAVGLSTL), and 290–310 (IVISFATFTLPVASLLTFFFV). One can recognise an ABC transporter domain in the interval 364-598 (IDLVSVDFGY…RGKLWKYHQM (235 aa)). Residue 397-404 (GASGAGKT) coordinates ATP.

It belongs to the ABC transporter superfamily.

The protein localises to the cell inner membrane. In terms of biological role, acts early in the process of morphological differentiation of heterocysts. The chain is Heterocyst differentiation ATP-binding protein HepA (hepA) from Nostoc sp. (strain PCC 7120 / SAG 25.82 / UTEX 2576).